The sequence spans 657 residues: SAGA complex subunit SGF73 (657 aa).

Residues cysteine 78, cysteine 81, histidine 93, and cysteine 98 each coordinate Zn(2+). 4 disordered regions span residues 98–225 (CAGA…TEKH), 287–353 (EKRA…VNLT), 469–532 (QQQQ…SQDT), and 572–636 (ESNQ…NVSG). Residues 107–118 (TDPRDESTRETI) are compositionally biased toward basic and acidic residues. Positions 131–163 (DDDNSNDNNNDDDDDDDNDDNEDDDDADDDDDN) are enriched in acidic residues. 2 stretches are compositionally biased toward polar residues: residues 174–193 (SSFN…TPNM) and 200–210 (TGTPQTFSSSI). One can recognise an SCA7 domain in the interval 220-286 (NPTEKHLIDF…EHQTKIGAAA (67 aa)). A compositionally biased stretch (basic residues) spans 306-321 (QKKHTQQQKQGQRSKQ). Composition is skewed to low complexity over residues 325–336 (NGGKSAKNGGKS) and 469–493 (QQQQ…QPTQ). The segment covering 504 to 516 (ATNSSFNANVSSK) has biased composition (polar residues). Over residues 517-526 (QIQQQQQQQQ) the composition is skewed to low complexity. A compositionally biased stretch (polar residues) spans 572–583 (ESNQDSHLSGTH). Residues 584–594 (NNNSSKNGNNN) are compositionally biased toward low complexity. Positions 600-636 (ASISSPNTSVNSIQSPPSVNSVNGSGQGVSTGINVSG) are enriched in polar residues.

It belongs to the ataxin-7 family. As to quaternary structure, component of the 1.8 MDa SAGA (Spt-Ada-Gcn5 acetyltransferase) complex, which is composed of 19 subunits TRA1, SPT7, TAF5, NGG1/ADA3, SGF73, SPT20/ADA5, SPT8, TAF12, TAF6, HFI1/ADA1, UBP8, GCN5, ADA2, SPT3, SGF29, TAF10, TAF9, SGF11 and SUS1. The SAGA complex is composed of 4 modules, namely the HAT (histone acetyltransferase) module (GCN5, ADA2, NGG1/ADA3 and SGF29), the DUB (deubiquitinating) module (UBP8, SGF11, SGF73 and SUS1), the core or TAF (TBP-associated factor) module (TAF5, TAF6, TAF9, TAF10 and TAF12), and the Tra1 or SPT (Suppressor of Ty) module (TRA1, HFI1/ADA1, SPT3, SPT7, SPT8 and SPT20/ADA5). The Tra1/SPT module binds activators, the core module recruits TBP (TATA-binding protein), the HAT module contains the histone H3 acetyltransferase GCN5, and the DUB module comprises the histone H2B deubiquitinase UBP8. Also identified in an altered form of SAGA, named SALSA (SAGA altered, Spt8 absent) or SLIK (SAGA-like) complex, which contains a C-terminal truncated form of SPT7 and is missing SPT8. However, it has been shown that the SAGA and SAGA-like SALSA/SLIK transcriptional coactivators are structurally and biochemically equivalent.

It localises to the nucleus. It is found in the cytoplasm. Component of the transcription coactivator SAGA complex. SAGA acts as a general cofactor required for essentially all RNA polymerase II transcription. At the promoters, SAGA is required for transcription pre-initiation complex (PIC) recruitment. It influences RNA polymerase II transcriptional activity through different activities such as TBP interaction (via core/TAF module) and promoter selectivity, interaction with transcription activators (via Tra1/SPT module), and chromatin modification through histone acetylation (via HAT module) and deubiquitination (via DUB module). SAGA preferentially acetylates histones H3 (to form H3K9ac, H3K14ac, H3K18ac and H3K23ac) and H2B and deubiquitinates histone H2B. SAGA interacts with DNA via upstream activating sequences (UASs). Also identified in a modified version of SAGA named SALSA or SLIK. The cleavage of SPT7 and the absence of the SPT8 subunit in SLIK neither drive any major conformational differences in its structure compared with SAGA, nor significantly affect HAT, DUB, or DNA-binding activities. SGF73 tethers the DUB module to the rest of the SAGA complex through its central domain and activates the ubiquitin hydrolase UBP8 by maintaining its catalytic domain in an active conformation. SGF73 mediates recruitment of the TREX-2 mRNA export factors SAC3 and THP1 to SAGA, which is crucial to target TREX-2 to the nuclear pore complex (NPC) necessary for export of mRNA. Upon environmental stress, involved in the bypass of the canonical mRNA export process for the immediate export of stress-related transcripts to maintain proteostasis. The chain is SAGA complex subunit SGF73 (SGF73) from Saccharomyces cerevisiae (strain ATCC 204508 / S288c) (Baker's yeast).